Reading from the N-terminus, the 81-residue chain is UPF0410 protein YwzA (81 aa).

Transmembrane regions (helical) follow at residues 1–21 (MSFL…SLFV), 27–47 (GGII…HGLL), and 56–76 (GFAI…VSLL).

This sequence belongs to the UPF0410 family.

The protein resides in the cell membrane. The sequence is that of UPF0410 protein YwzA (ywzA) from Bacillus subtilis (strain 168).